A 329-amino-acid chain; its full sequence is Dapdiamide synthesis protein DdaC (329 aa).

Fe(2+) is required as a cofactor.

Its pathway is antibiotic biosynthesis. In terms of biological role, involved in dapdiamide antibiotics biosynthesis. Catalyzes the alpha-ketoglutarate-dependent epoxidation of the covalently bound N-beta-fumaramoyl-DAP-S-DdaD to generate N-beta-epoxysuccinamoyl-DAP in thioester linkage to DdaD. This Enterobacter agglomerans (Erwinia herbicola) protein is Dapdiamide synthesis protein DdaC.